The following is a 632-amino-acid chain: 1-deoxy-D-xylulose-5-phosphate synthase (632 aa).

Residues H77 and 118-120 contribute to the thiamine diphosphate site; that span reads GHA. Residue D149 participates in Mg(2+) binding. Residues 150–151, N178, F287, and E372 contribute to the thiamine diphosphate site; that span reads GS. Mg(2+) is bound at residue N178.

Belongs to the transketolase family. DXPS subfamily. In terms of assembly, homodimer. The cofactor is Mg(2+). Thiamine diphosphate is required as a cofactor.

The enzyme catalyses D-glyceraldehyde 3-phosphate + pyruvate + H(+) = 1-deoxy-D-xylulose 5-phosphate + CO2. The protein operates within metabolic intermediate biosynthesis; 1-deoxy-D-xylulose 5-phosphate biosynthesis; 1-deoxy-D-xylulose 5-phosphate from D-glyceraldehyde 3-phosphate and pyruvate: step 1/1. Catalyzes the acyloin condensation reaction between C atoms 2 and 3 of pyruvate and glyceraldehyde 3-phosphate to yield 1-deoxy-D-xylulose-5-phosphate (DXP). This is 1-deoxy-D-xylulose-5-phosphate synthase from Chlorobium luteolum (strain DSM 273 / BCRC 81028 / 2530) (Pelodictyon luteolum).